Consider the following 438-residue polypeptide: UDP-N-acetylmuramoylalanine--D-glutamate ligase (438 aa).

112-118 (GSNGKST) contributes to the ATP binding site.

Belongs to the MurCDEF family.

The protein localises to the cytoplasm. It catalyses the reaction UDP-N-acetyl-alpha-D-muramoyl-L-alanine + D-glutamate + ATP = UDP-N-acetyl-alpha-D-muramoyl-L-alanyl-D-glutamate + ADP + phosphate + H(+). It functions in the pathway cell wall biogenesis; peptidoglycan biosynthesis. Functionally, cell wall formation. Catalyzes the addition of glutamate to the nucleotide precursor UDP-N-acetylmuramoyl-L-alanine (UMA). This is UDP-N-acetylmuramoylalanine--D-glutamate ligase from Shigella dysenteriae serotype 1 (strain Sd197).